Consider the following 3974-residue polypeptide: Hybrid PKS-NRPS synthetase 1 (3974 aa).

In terms of domain architecture, Ketosynthase family 3 (KS3) spans 5–442 (SQKIAIIGSA…GTNAHCLIES (438 aa)). Active-site for beta-ketoacyl synthase activity residues include Cys-179, His-316, and His-362. Residues 561–883 (IFTGQGAQWA…TGILERGLDD (323 aa)) form a malonyl-CoA:ACP transacylase (MAT) domain region. Residues 954 to 1079 (HPLLGSRLSA…HDSELGIPES (126 aa)) are N-terminal hotdog fold. The interval 954-1251 (HPLLGSRLSA…QVESVKLVPV (298 aa)) is dehydratase (DH) domain. Residues 954–1257 (HPLLGSRLSA…LVPVITPDAS (304 aa)) form the PKS/mFAS DH domain. The active-site Proton acceptor; for dehydratase activity is His-986. A C-terminal hotdog fold region spans residues 1107–1257 (TTPISSAKIY…LVPVITPDAS (151 aa)). Asp-1165 acts as the Proton donor; for dehydratase activity in catalysis. The segment at 1398–1529 (PWNTELRNAI…GYLLLVAKTG (132 aa)) is methyltransferase (MT) domain. The interval 2108 to 2282 (TYFLAGMTDS…ASIMDTGVVT (175 aa)) is ketoreductase (KR) domain. The disordered stretch occupies residues 2492–2516 (AGRSASPGASCSDRSLSTRSDETRS). Over residues 2498–2509 (PGASCSDRSLST) the composition is skewed to polar residues. The tract at residues 2560-2994 (APLSPGQAQL…LERLRTSSDQ (435 aa)) is condensation (C) domain. The adenylation (A) (KR) domain stretch occupies residues 3021–3423 (DAMAEKYFDQ…DGSLILLGRM (403 aa)). The region spanning 3537–3613 (SADQLVEAEV…EMAEKMASVR (77 aa)) is the Carrier domain. The residue at position 3573 (Ser-3573) is an O-(pantetheine 4'-phosphoryl)serine. The reductase (RED) domain stretch occupies residues 3657–3940 (VVLTGAADLL…KLEMGEWIAL (284 aa)).

This sequence in the C-terminal section; belongs to the NRP synthetase family.

Its pathway is secondary metabolite biosynthesis. Hybrid PKS-NRPS synthetase; part of the hps1-dma1 gene cluster that probably mediates the biosynthesis a derivative of cyclopiazonic acid (CPA). The hybrid polyketide synthase-nonribosomal peptide synthetase (PKS-NRPS) nps1 might incorporates acetyl-CoA, malonyl-CoA, and tryptophan (Trp) and utilizes a C-terminal redox-incompetent reductase domain to make and release the tryptophan tetramic acid, cyclo-acetoacetyl-L-tryptophan (c-AATrp), as the first intermediate in the pathway. In addition, the cluster also includes the tryptophan dimethylallyltransferase dma1, the FAD-dependent oxidoreductase toxD, the cytochrome P450 monooxygenase cyp3.1 and the methyltransferase DOTSEDRAFT_139328; the latter 2 being not present in all CPA-producing fungi but involved in additional modifications that occur in biosynthesis the of a range of CPA and CPA-like products. Further studies are required to clarify whether the CPA-like hps1-dma1 cluster is functional or a non-functional relic reflecting evolution of D.septosporum. The polypeptide is Hybrid PKS-NRPS synthetase 1 (Dothistroma septosporum (strain NZE10 / CBS 128990) (Red band needle blight fungus)).